Consider the following 287-residue polypeptide: Pyridoxal kinase PdxY (287 aa).

Substrate is bound by residues Ser10 and 45–46 (TQ). Residues Asp112, Ala144, Glu149, Lys182, and 209 to 212 (RPLV) each bind ATP. A substrate-binding site is contributed by Asp224.

Belongs to the pyridoxine kinase family. PdxY subfamily. As to quaternary structure, homodimer. Requires Mg(2+) as cofactor.

The catalysed reaction is pyridoxal + ATP = pyridoxal 5'-phosphate + ADP + H(+). The protein operates within cofactor metabolism; pyridoxal 5'-phosphate salvage; pyridoxal 5'-phosphate from pyridoxal: step 1/1. Its function is as follows. Pyridoxal kinase involved in the salvage pathway of pyridoxal 5'-phosphate (PLP). Catalyzes the phosphorylation of pyridoxal to PLP. This chain is Pyridoxal kinase PdxY, found in Escherichia coli (strain UTI89 / UPEC).